A 310-amino-acid polypeptide reads, in one-letter code: Deoxyribonuclease gamma (310 aa).

An N-terminal signal peptide occupies residues Met1 to Ser25. The Bipartite nuclear localization signal motif lies at Lys40–Arg56. Active-site residues include Glu105 and His160. Cys199 and Cys236 form a disulfide bridge. The interval Ser289–Ser310 is not required for free DNA-nuclease activity but required for activity towards liposome-coated DNA. Positions Leu301–Gly307 match the Nuclear localization signal motif.

The protein belongs to the DNase I family. In terms of assembly, monomer. It depends on Ca(2+) as a cofactor. Requires Mg(2+) as cofactor. In terms of processing, seems to be synthesized as an inactive precursor protein and converted into an active mature enzyme by removal of the N-terminal precursor peptide during apoptosis. Poly-ADP-ribosylated by PARP1. ADP-ribosylation negatively regulates enzymatic activity during apoptosis. Detected at high levels in spleen, lymph nodes, thymus and liver. Observed also in kidney and testis, but not in brain or heart.

It localises to the nucleus. It is found in the secreted. Inhibited by zinc. Has DNA hydrolytic activity. Is capable of both single- and double-stranded DNA cleavage, producing DNA fragments with 3'-OH ends. Can cleave chromatin to nucleosomal units and cleaves nucleosomal and liposome-coated DNA. Acts in internucleosomal DNA fragmentation (INDF) during apoptosis and necrosis. The role in apoptosis includes myogenic and neuronal differentiation, and BCR-mediated clonal deletion of self-reactive B cells. Is active on chromatin in apoptotic cell-derived membrane-coated microparticles and thus suppresses anti-DNA autoimmunity. Together with DNASE1, plays a key role in degrading neutrophil extracellular traps (NETs). NETs are mainly composed of DNA fibers and are released by neutrophils to bind pathogens during inflammation. Degradation of intravascular NETs by DNASE1 and DNASE1L3 is required to prevent formation of clots that obstruct blood vessels and cause organ damage following inflammation. The chain is Deoxyribonuclease gamma (Dnase1l3) from Rattus norvegicus (Rat).